Consider the following 489-residue polypeptide: Ulvan Lyase-PL25 (489 aa).

The signal sequence occupies residues 1-31 (MNLNKTLRKNSPSGYKALLTFSIICGLMATG). C32 carries N-palmitoyl cysteine lipidation. C32 carries the S-diacylglycerol cysteine lipid modification. Residues N60 and N122 each coordinate substrate. The active-site Proton donor is the H123. 2 residues coordinate substrate: K125 and H143. Y188 serves as the catalytic Proton acceptor. Substrate is bound by residues R204, H208, and Y246. Residue H208 participates in Zn(2+) binding. Zn(2+) is bound by residues H264, C266, and H278. H278 serves as a coordination point for substrate.

It belongs to the polysaccharide lyase 25 family.

The protein resides in the cell membrane. Its function is as follows. Ulvan lyase involved in ulvan degradation. Ulvan is the main polysaccharide component of the Ulvales (green seaweed) cell wall. It is composed of disaccharide building blocks comprising 3-sulfated rhamnose (Rha3S) linked to D-glucuronic acid (GlcA), L-iduronic acid (IduA), or D-xylose (Xyl). Ulvan lyase catalyzes the endolytic cleavage of the glycosidic bond between Rha3S and the uronic acids GlcA or IduA, producing oligosaccharides that have unsaturated 4-deoxy-L-threo-hex-4-enopyranosiduronic acid (deltaUA) at the non-reducing end. This results eventually in the degradation of the ulvan polysaccharide into deltaUA-Rha3S disaccharides and deltaUA-Rha3S-Xyl-Rha3S tetrasaccharides. The chain is Ulvan Lyase-PL25 from Pseudoalteromonas sp. (strain PLSV).